The following is a 66-amino-acid chain: Dermaseptin PD-3-7 (66 aa).

An N-terminal signal peptide occupies residues 1–22 (MSFMKKSLLLVLFLGVVSLSNC). A propeptide spanning residues 23-40 (EEEKGENENEDHEEHHEE) is cleaved from the precursor.

Expressed by the skin glands.

Its subcellular location is the secreted. Functionally, possesses a potent antimicrobial activity against Gram-positive and Gram-negative bacteria. Probably acts by disturbing membrane functions with its amphipathic structure. The protein is Dermaseptin PD-3-7 of Agalychnis dacnicolor (Giant Mexican leaf frog).